A 400-amino-acid chain; its full sequence is Aspartate aminotransferase (400 aa).

L-aspartate contacts are provided by Gly-42 and Asn-180. Lys-241 carries the post-translational modification N6-(pyridoxal phosphate)lysine. Arg-373 is a binding site for L-aspartate.

It belongs to the class-I pyridoxal-phosphate-dependent aminotransferase family. Homodimer. It depends on pyridoxal 5'-phosphate as a cofactor.

It localises to the cytoplasm. It catalyses the reaction L-aspartate + 2-oxoglutarate = oxaloacetate + L-glutamate. The chain is Aspartate aminotransferase (aspC) from Sulfolobus acidocaldarius (strain ATCC 33909 / DSM 639 / JCM 8929 / NBRC 15157 / NCIMB 11770).